The sequence spans 146 residues: Meiotically up-regulated gene 96 protein (146 aa).

The helical transmembrane segment at 85 to 104 (LIRYSLILTCLVAILLSVLW) threads the bilayer.

It is found in the cytoplasm. It localises to the membrane. In terms of biological role, has a role in meiosis. The protein is Meiotically up-regulated gene 96 protein (mug96) of Schizosaccharomyces pombe (strain 972 / ATCC 24843) (Fission yeast).